Here is a 187-residue protein sequence, read N- to C-terminus: Elongation factor P (187 aa).

The protein belongs to the elongation factor P family.

The protein localises to the cytoplasm. It functions in the pathway protein biosynthesis; polypeptide chain elongation. In terms of biological role, involved in peptide bond synthesis. Stimulates efficient translation and peptide-bond synthesis on native or reconstituted 70S ribosomes in vitro. Probably functions indirectly by altering the affinity of the ribosome for aminoacyl-tRNA, thus increasing their reactivity as acceptors for peptidyl transferase. The polypeptide is Elongation factor P (Roseiflexus castenholzii (strain DSM 13941 / HLO8)).